The chain runs to 269 residues: 4-hydroxy-tetrahydrodipicolinate reductase (269 aa).

NAD(+) contacts are provided by residues 9–14 (GAGGRM) and glutamate 35. Arginine 36 is a binding site for NADP(+). NAD(+) contacts are provided by residues 98–100 (GTT) and 122–125 (ASNY). Histidine 155 acts as the Proton donor/acceptor in catalysis. Residue histidine 156 participates in (S)-2,3,4,5-tetrahydrodipicolinate binding. Catalysis depends on lysine 159, which acts as the Proton donor. 165-166 (GT) contributes to the (S)-2,3,4,5-tetrahydrodipicolinate binding site.

This sequence belongs to the DapB family.

It is found in the cytoplasm. The catalysed reaction is (S)-2,3,4,5-tetrahydrodipicolinate + NAD(+) + H2O = (2S,4S)-4-hydroxy-2,3,4,5-tetrahydrodipicolinate + NADH + H(+). It carries out the reaction (S)-2,3,4,5-tetrahydrodipicolinate + NADP(+) + H2O = (2S,4S)-4-hydroxy-2,3,4,5-tetrahydrodipicolinate + NADPH + H(+). Its pathway is amino-acid biosynthesis; L-lysine biosynthesis via DAP pathway; (S)-tetrahydrodipicolinate from L-aspartate: step 4/4. Catalyzes the conversion of 4-hydroxy-tetrahydrodipicolinate (HTPA) to tetrahydrodipicolinate. The sequence is that of 4-hydroxy-tetrahydrodipicolinate reductase from Actinobacillus pleuropneumoniae serotype 7 (strain AP76).